The following is a 528-amino-acid chain: Negative elongation factor A (528 aa).

Residues 89 to 248 (WVLMVADILK…TPIPPSRTLL (160 aa)) form the HDAg domain. The tract at residues 125 to 188 (REKVGECEAS…LQKSTETAQQ (64 aa)) is NELF-C/D-binding. Thr-157 carries the phosphothreonine modification. Positions 189 to 248 (LKRSAGVPFHAKGRGLLRKMDTTTPLKGIPKQAPFRSPTAPSVFSPTGNRTPIPPSRTLL) are RNAPII-binding. Residues 215–245 (KGIPKQAPFRSPTAPSVFSPTGNRTPIPPSR) are disordered. Ser-225 and Ser-233 each carry phosphoserine. A compositionally biased stretch (polar residues) spans 227-238 (TAPSVFSPTGNR). Thr-277 carries the post-translational modification Phosphothreonine. Low complexity predominate over residues 320 to 341 (PSTSYLPSTPSVVPASSYIPSS). Residues 320-409 (PSTSYLPSTP…PPAVAPTTQT (90 aa)) form a disordered region. Position 363 is a phosphoserine (Ser-363).

The protein belongs to the NELF-A family. The NELF complex is composed of NELFA, NELFB, NELFCD (isoform NELF-C or isoform NELF-D) and NELFE; NELFA and NELFCD form a stable subcomplex that binds to the N-terminus of NELFB. In vitro, the NELFA:NELFCD subcomplex binds to ssDNA and ssRNA in a sequence- and structure-dependent manner. Interacts with the RNA polymerase II complex when it is not phosphorylated by P-TEFb. Ubiquitous. Expressed in heart, brain, placenta, liver, skeletal muscle, kidney and pancreas. Expressed at lower level in adult lung. Expressed in fetal brain, lung, liver and kidney.

The protein resides in the nucleus. Functionally, essential component of the NELF complex, a complex that negatively regulates the elongation of transcription by RNA polymerase II. The NELF complex, which acts via an association with the DSIF complex and causes transcriptional pausing, is counteracted by the P-TEFb kinase complex. Its function is as follows. (Microbial infection) The NELF complex is involved in HIV-1 latency possibly involving recruitment of PCF11 to paused RNA polymerase II. The sequence is that of Negative elongation factor A (NELFA) from Homo sapiens (Human).